We begin with the raw amino-acid sequence, 808 residues long: Homeobox-leucine zipper protein HDG1 (808 aa).

Residues 57–121 (LQTNGEMSRN…KRYHRHTPKQ (65 aa)) form a disordered region. Basic and acidic residues predominate over residues 79–90 (SRGEDVESRSES). Positions 108 to 119 (LKKKKRYHRHTP) are enriched in basic residues. Positions 110 to 169 (KKKRYHRHTPKQIQDLESVFKECAHPDEKQRLDLSRRLNLDPRQVKFWFQNRRTQMKTQI) form a DNA-binding region, homeobox. Positions 158–233 (FQNRRTQMKT…SRLKDELDRV (76 aa)) form a coiled coil. In terms of domain architecture, START spans 310 to 541 (DFDQRSRYLD…LQRQCECLTI (232 aa)).

It belongs to the HD-ZIP homeobox family. Class IV subfamily. Interacts with CFL1. Binds with BBM. Expressed in trichomes forming at the base of young leaves, in endodermal cell lines around emergent lateral roots and in the epidermal layer of the stamen filament.

It localises to the nucleus. Its function is as follows. Probable transcription factor. Promotes cuticle development probably by modulating the expression of the downstream genes BDG and FDH, possibly repressed in a CFL1-dependent manner. Involved, together with PDF2, in the regulation of flower organs development by promoting the expression of APETALA 3 (AP3) in the epidermis and internal cell layers of developing flowers. In opposition to BBM, seems to promote cell differentiation and giant cell identity via transcriptional repression of meristem and cell proliferation genes. The sequence is that of Homeobox-leucine zipper protein HDG1 from Arabidopsis thaliana (Mouse-ear cress).